The following is a 77-amino-acid chain: Translation initiation factor IF-1, chloroplastic (77 aa).

The region spanning 1-71 (MKEQKWIHEG…TRGRIIYRLR (71 aa)) is the S1-like domain.

It belongs to the IF-1 family. In terms of assembly, component of the 30S ribosomal translation pre-initiation complex which assembles on the 30S ribosome in the order IF-2 and IF-3, IF-1 and N-formylmethionyl-tRNA(fMet); mRNA recruitment can occur at any time during PIC assembly.

Its subcellular location is the plastid. It is found in the chloroplast. Functionally, one of the essential components for the initiation of protein synthesis. Stabilizes the binding of IF-2 and IF-3 on the 30S subunit to which N-formylmethionyl-tRNA(fMet) subsequently binds. Helps modulate mRNA selection, yielding the 30S pre-initiation complex (PIC). Upon addition of the 50S ribosomal subunit IF-1, IF-2 and IF-3 are released leaving the mature 70S translation initiation complex. In Brexia madagascariensis, this protein is Translation initiation factor IF-1, chloroplastic.